Reading from the N-terminus, the 506-residue chain is Protein P7 (506 aa).

RNA-binding stretches follow at residues 128-249 (ISYL…GKRE) and 325-355 (DGSYGNRVIISHKMSRLSNGGVKIIGRFKIS).

Belongs to the phytoreovirus protein P7 family.

The protein localises to the virion. It is found in the host cytoplasm. In terms of biological role, probable component of the transcriptional machinery present in the inner capsid. Displays dsRNA binding activity and may play an important role in the sorting of viral RNA and virion assembly. Together with the RNA-directed RNA polymerase P1 and capping enzyme P5, forms an transcriptional complex positioned near the channels situated at each of the five-fold vertices of the core. This Alopecurus aequalis (Barnyard grass) protein is Protein P7.